The primary structure comprises 158 residues: Transcription elongation factor GreA (158 aa).

Positions 53-73 form a coiled coil; that stretch reads EQQSFIEGRIQEIEGKLSNAQ.

It belongs to the GreA/GreB family.

Necessary for efficient RNA polymerase transcription elongation past template-encoded arresting sites. The arresting sites in DNA have the property of trapping a certain fraction of elongating RNA polymerases that pass through, resulting in locked ternary complexes. Cleavage of the nascent transcript by cleavage factors such as GreA or GreB allows the resumption of elongation from the new 3'terminus. GreA releases sequences of 2 to 3 nucleotides. In Halorhodospira halophila (strain DSM 244 / SL1) (Ectothiorhodospira halophila (strain DSM 244 / SL1)), this protein is Transcription elongation factor GreA.